We begin with the raw amino-acid sequence, 534 residues long: Pentatricopeptide repeat-containing protein At5g59600 (534 aa).

PPR repeat units follow at residues leucine 50–arginine 80, aspartate 81–leucine 115, aspartate 116–serine 150, aspartate 151–glutamine 181, aspartate 182–proline 216, aspartate 217–proline 251, aspartate 252–proline 286, asparagine 287–aspartate 321, histidine 322–lysine 352, threonine 353–leucine 387, aspartate 388–lysine 418, and arginine 424–glutamate 454. Residues valine 459–valine 534 are type E motif.

Belongs to the PPR family. PCMP-E subfamily.

This is Pentatricopeptide repeat-containing protein At5g59600 (PCMP-E1) from Arabidopsis thaliana (Mouse-ear cress).